The chain runs to 221 residues: UPF0502 protein PSPTO_2686 (221 aa).

It belongs to the UPF0502 family.

The chain is UPF0502 protein PSPTO_2686 from Pseudomonas syringae pv. tomato (strain ATCC BAA-871 / DC3000).